A 465-amino-acid polypeptide reads, in one-letter code: Cysteine--tRNA ligase (465 aa).

Residue C27 participates in Zn(2+) binding. Residues 29-39 (PTVYNFFHIGN) carry the 'HIGH' region motif. Zn(2+) is bound by residues C207, H232, and E236. The short motif at 264-268 (KMSKS) is the 'KMSKS' region element. K267 provides a ligand contact to ATP.

It belongs to the class-I aminoacyl-tRNA synthetase family. Monomer. The cofactor is Zn(2+).

Its subcellular location is the cytoplasm. The catalysed reaction is tRNA(Cys) + L-cysteine + ATP = L-cysteinyl-tRNA(Cys) + AMP + diphosphate. The protein is Cysteine--tRNA ligase of Clostridium botulinum (strain 657 / Type Ba4).